The following is a 121-amino-acid chain: MKSFVFALALIVAFACISESKSDHTGYEEEENLEDSELTDLVTAALLEELAEASEMDDLSYTEEAGGERMDKLEEMALKLKDKLKTMAEKGAQMGEKLKEMLPKAIEKLKELTEKMKNKMG.

An N-terminal signal peptide occupies residues 1-22 (MKSFVFALALIVAFACISESKS). Residues 23-69 (DHTGYEEEENLEDSELTDLVTAALLEELAEASEMDDLSYTEEAGGER) constitute a propeptide that is removed on maturation. At M120 the chain carries Methionine amide.

In terms of tissue distribution, expressed by the venom gland.

It is found in the secreted. Its function is as follows. Shows no antimicrobial activity against Gram-positive bacterium B.subtilis B-501 or Gram-negative bacterium E.coli DH5-alpha at concentrations up to 20 ug/ml. Shows no toxicity towards insect (S.carnaria) larvae. The sequence is that of Met-lysine-1a from Lachesana tarabaevi (Spider).